Here is a 404-residue protein sequence, read N- to C-terminus: MQQVKKVVLAYSGGVDTSVCIPYLKNEYGISEVVTFVADLGQGDDLEIVRQKALNSGATKSVIGNLVDNFVEKYAFPAIRANALYGEKYPLSTALARPLIAENLVNLARELNADAVAHGCTGKGNDQVRFDLAIHALGPDLQIITPAREWKMSREEAILYGEKFGIPAPVSKKSPYSIDVNLLGRSIEAGLLEDPMQEPDEDVFDMTSSINNAPNAPKDVEIIFQNGFPIAIGNEFLSPVEIIQKANSLAGEHGFGRIDMIEDRVVGIKSREIYEAPGLLLLIKAHKELESITLNPDVLDFKNIVEKKWGQLVYQGFWFGPLKQALDGFIDSTQSSVNGKVKIRLHKGNAIVIGRSSQNNSLYREDLATYSKDDIFNHKQAEGFIYMWGMSNKIWAELNSKKNK.

ATP contacts are provided by residues 10–18 (AYSGGVDTS) and Ala38. Tyr89 provides a ligand contact to L-citrulline. Gly119 serves as a coordination point for ATP. L-aspartate is bound by residues Thr121, Asn125, and Asp126. Position 125 (Asn125) interacts with L-citrulline. The L-citrulline site is built by Arg129, Ser177, Ser186, Glu262, and Tyr274.

It belongs to the argininosuccinate synthase family. Type 1 subfamily. Homotetramer.

It is found in the cytoplasm. It catalyses the reaction L-citrulline + L-aspartate + ATP = 2-(N(omega)-L-arginino)succinate + AMP + diphosphate + H(+). The protein operates within amino-acid biosynthesis; L-arginine biosynthesis; L-arginine from L-ornithine and carbamoyl phosphate: step 2/3. The sequence is that of Argininosuccinate synthase from Prochlorococcus marinus subsp. pastoris (strain CCMP1986 / NIES-2087 / MED4).